The chain runs to 1033 residues: Immunoglobulin superfamily member 2 (1033 aa).

Positions 1–20 are cleaved as a signal peptide; it reads MACILCVASLFLSLTKFSIG. The Extracellular portion of the chain corresponds to 21-970; the sequence is QREVKIQEGP…VSSLICSSGP (950 aa). Ig-like C2-type domains are found at residues 22–141, 144–266, 279–388, 408–529, 539–657, 670–797, and 806–941; these read REVK…TNLT, PDTL…TLIT, PAAR…TQMG, PAAR…QKIS, LRVN…ARVS, PESK…RKTS, and PTGS…KWIN. Residues C43 and C121 are joined by a disulfide bond. N139 carries N-linked (GlcNAc...) asparagine glycosylation. An intrachain disulfide couples C168 to C249. The EWI motif signature appears at 253-255; that stretch reads EWI. 3 cysteine pairs are disulfide-bonded: C304/C377, C432/C509, and C560/C638. N677 carries N-linked (GlcNAc...) asparagine glycosylation. 2 disulfides stabilise this stretch: C695–C776 and C832–C925. The chain crosses the membrane as a helical span at residues 971 to 991; sequence LLHFLIVCPFVMLLLLATSFL. The Cytoplasmic portion of the chain corresponds to 992–1033; sequence CLYRKARKLSQLSLSAKKEKALWVGMRKTSLQKEAGEESGHY.

In terms of processing, N-glycosylated.

The protein localises to the membrane. Its function is as follows. Plays a role as inhibitor of T-cells proliferation induced by CD3. Inhibits expression of IL2RA on activated T-cells and secretion of IL2. Inhibits tyrosine kinases that are required for IL2 production and cellular proliferation. Inhibits phospholipase C-gamma-1/PLCG1 phosphorylation and subsequent CD3-induced changes in intracellular free calcium. Prevents nuclear translocation of nuclear factor of activated T-cell to the nucleus. Plays a role in the inhibition of T-cell proliferation via IL10 secretion by cutaneous dendritic cells. This is Immunoglobulin superfamily member 2 (Cd101) from Mus musculus (Mouse).